The chain runs to 1498 residues: Golgin subfamily A member 3 (1498 aa).

Met-1 is subject to N-acetylmethionine. Residues 1–118 (MDGASAEQDG…GTSAEGSVRK (118 aa)) form a disordered region. A Phosphoserine modification is found at Ser-18. A compositionally biased stretch (pro residues) spans 27–36 (PLKPPGPLVP). Ser-57 is modified (phosphoserine). A compositionally biased stretch (pro residues) spans 71 to 81 (PTPPFPDPPSS). Residues 121 to 141 (LQSLRLSLPMQETQLCSTDSP) form an interaction with GOPC region. Disordered stretches follow at residues 166 to 195 (RVKR…MLNP) and 216 to 325 (SVPR…SAST). Positions 172-257 (ERSSQPATKT…DYRTEDSNAG (86 aa)) are golgi-targeting domain. Composition is skewed to polar residues over residues 173-184 (RSSQPATKTRLF) and 269-291 (TKGS…SLSP). Position 272 is a phosphoserine (Ser-272). Residues 315–324 (SDSSSYSSAS) show a composition bias toward low complexity. Phosphoserine occurs at positions 385, 389, and 465. Residues 394 to 1459 (VSLESSAAET…ALTVHESLSS (1066 aa)) are a coiled coil. The span at 789–801 (KEELDRGARRLEE) shows a compositional bias: basic and acidic residues. 4 disordered regions span residues 789-809 (KEEL…TSET), 974-993 (QKQK…KEMK), 1376-1400 (RGAA…PIKI), and 1440-1498 (DSLQ…GPGE). Ser-983 is subject to Phosphoserine. A compositionally biased stretch (basic and acidic residues) spans 1376–1387 (RGAAKTRKEPKG). Residue Ser-1392 is modified to Phosphoserine. A compositionally biased stretch (basic and acidic residues) spans 1440–1452 (DSLQRQMEEHALT).

Homodimer. Interacts with GOLGA7. Isoform 1 interacts with GOPC while isoform 3 does not. In terms of processing, cleaved by caspases in apoptotic cells. As to expression, expressed in all tissues tested. Expressed in liver, testis, lung, heart, salivary gland and kidney.

The protein localises to the cytoplasm. It is found in the golgi apparatus. It localises to the golgi stack membrane. Its function is as follows. Golgi auto-antigen; probably involved in maintaining Golgi structure. In Homo sapiens (Human), this protein is Golgin subfamily A member 3 (GOLGA3).